Reading from the N-terminus, the 991-residue chain is Valine--tRNA ligase (991 aa).

Residues Pro-43–His-53 carry the 'HIGH' region motif. The short motif at Lys-582 to Ser-586 is the 'KMSKS' region element. Lys-585 contributes to the ATP binding site. The interval Ala-689–Arg-711 is disordered. A compositionally biased stretch (low complexity) spans Ala-693–Ala-704. The stretch at Leu-925 to Arg-988 forms a coiled coil.

It belongs to the class-I aminoacyl-tRNA synthetase family. ValS type 1 subfamily. Monomer.

The protein resides in the cytoplasm. The enzyme catalyses tRNA(Val) + L-valine + ATP = L-valyl-tRNA(Val) + AMP + diphosphate. Its function is as follows. Catalyzes the attachment of valine to tRNA(Val). As ValRS can inadvertently accommodate and process structurally similar amino acids such as threonine, to avoid such errors, it has a 'posttransfer' editing activity that hydrolyzes mischarged Thr-tRNA(Val) in a tRNA-dependent manner. In Xylella fastidiosa (strain M12), this protein is Valine--tRNA ligase.